Consider the following 106-residue polypeptide: Aspartyl/glutamyl-tRNA(Asn/Gln) amidotransferase subunit C (106 aa).

This sequence belongs to the GatC family. As to quaternary structure, heterotrimer of A, B and C subunits.

The catalysed reaction is L-glutamyl-tRNA(Gln) + L-glutamine + ATP + H2O = L-glutaminyl-tRNA(Gln) + L-glutamate + ADP + phosphate + H(+). It catalyses the reaction L-aspartyl-tRNA(Asn) + L-glutamine + ATP + H2O = L-asparaginyl-tRNA(Asn) + L-glutamate + ADP + phosphate + 2 H(+). Its function is as follows. Allows the formation of correctly charged Asn-tRNA(Asn) or Gln-tRNA(Gln) through the transamidation of misacylated Asp-tRNA(Asn) or Glu-tRNA(Gln) in organisms which lack either or both of asparaginyl-tRNA or glutaminyl-tRNA synthetases. The reaction takes place in the presence of glutamine and ATP through an activated phospho-Asp-tRNA(Asn) or phospho-Glu-tRNA(Gln). This chain is Aspartyl/glutamyl-tRNA(Asn/Gln) amidotransferase subunit C, found in Lactiplantibacillus plantarum (strain ATCC BAA-793 / NCIMB 8826 / WCFS1) (Lactobacillus plantarum).